Consider the following 582-residue polypeptide: Enhancer of polycomb-like protein 1 (582 aa).

Residues 238 to 295 adopt a coiled-coil conformation; the sequence is RDAQSADKLRRLRKELEDARQLVALVRQRELARKEMLSMERQIFLQRSEVKEMKRKLN. A disordered region spans residues 323–351; that stretch reads PEQPKKKPAEAPAAQRPTAPQIRMPQKPG. A coiled-coil region spans residues 352–385; the sequence is TQAADDMQLLEDVQAEKENEILRDIKQNIAKHIK. A compositionally biased stretch (low complexity) spans 539–555; the sequence is AQAHAQAQAQKRLQAEQ. Residues 539–582 form a disordered region; sequence AQAHAQAQAQKRLQAEQTTTNNGPPNIGHTMGSNPGPGAVASTS.

Belongs to the enhancer of polycomb family. In terms of assembly, component of the NuA4 histone acetyltransferase complex.

Its subcellular location is the nucleus. Component of the NuA4 histone acetyltransferase complex which is involved in transcriptional activation of selected genes principally by acetylation of nucleosomal histone H4 and H2A. The NuA4 complex is also involved in DNA repair. Involved in gene silencing by neighboring heterochromatin, blockage of the silencing spreading along the chromosome, and required for cell cycle progression through G2/M. The protein is Enhancer of polycomb-like protein 1 (epl1) of Aspergillus fumigatus (strain ATCC MYA-4609 / CBS 101355 / FGSC A1100 / Af293) (Neosartorya fumigata).